The sequence spans 505 residues: Flagellin (505 aa).

Belongs to the bacterial flagellin family.

The protein localises to the secreted. It is found in the bacterial flagellum. Its function is as follows. Flagellin is the subunit protein which polymerizes to form the filaments of bacterial flagella. The polypeptide is Flagellin (fliC) (Salmonella dublin).